The chain runs to 222 residues: Kinetochore protein Spc25 (222 aa).

The stretch at 51–86 (RHQRKVGKLQKVLMERREELDKRVSFIEELDRELEA) forms a coiled coil.

This sequence belongs to the SPC25 family. In terms of assembly, component of the Ndc80 complex, which is composed of Ndc80, Nuf2 and Spc25.

The protein localises to the nucleus. It localises to the chromosome. The protein resides in the centromere. Its subcellular location is the kinetochore. Acts as a component of the essential kinetochore-associated Ndc80 complex, which is required for chromosome segregation and spindle checkpoint activity during meiosis and mitosis. Required for kinetochore integrity and the organization of stable microtubule binding sites in the outer plate of the kinetochore. Participates in SAC signaling that responds specifically to disruptions in spindle microtubule dynamics. The NDC80 complex synergistically enhances the affinity of the SKA1 complex for microtubules and may allow the NDC80 complex to track depolymerizing microtubules. The chain is Kinetochore protein Spc25 from Drosophila simulans (Fruit fly).